The primary structure comprises 215 residues: Interleukin-12 subunit alpha (215 aa).

An N-terminal signal peptide occupies residues 1–22; it reads MCSSRCLLFLATLAFLIHLSLA. 3 cysteine pairs are disulfide-bonded: Cys-33–Cys-106, Cys-60–Cys-192, and Cys-81–Cys-119. An N-linked (GlcNAc...) asparagine glycan is attached at Asn-89.

This sequence belongs to the IL-6 superfamily. Heterodimer with IL12B; disulfide-linked. This heterodimer is known as interleukin IL-12. Heterodimer with EBI3/IL27B; not disulfide-linked. This heterodimer is known as interleukin IL-35. Interacts with NBR1; this interaction promotes IL-12 secretion.

Its subcellular location is the secreted. Heterodimerizes with IL12B to form the IL-12 cytokine or with EBI3/IL27B to form the IL-35 cytokine. IL-12 is primarily produced by professional antigen-presenting cells (APCs) such as B-cells and dendritic cells (DCs) as well as macrophages and granulocytes and regulates T-cell and natural killer-cell responses, induces the production of interferon-gamma (IFN-gamma), favors the differentiation of T-helper 1 (Th1) cells and is an important link between innate resistance and adaptive immunity. Mechanistically, exerts its biological effects through a receptor composed of IL12R1 and IL12R2 subunits. Binding to the receptor results in the rapid tyrosine phosphorylation of a number of cellular substrates including the JAK family kinases TYK2 and JAK2. In turn, recruited STAT4 gets phosphorylated and translocates to the nucleus where it regulates cytokine/growth factor responsive genes. As part of IL-35, plays essential roles in maintaining the immune homeostasis of the liver microenvironment and also functions as an immune-suppressive cytokine. Mediates biological events through unconventional receptors composed of IL12RB2 and gp130/IL6ST heterodimers or homodimers. Signaling requires the transcription factors STAT1 and STAT4, which form a unique heterodimer that binds to distinct DNA sites. This chain is Interleukin-12 subunit alpha (IL12A), found in Sigmodon hispidus (Hispid cotton rat).